The following is a 318-amino-acid chain: L-carnitine dehydrogenase (318 aa).

14–19 provides a ligand contact to NAD(+); the sequence is GSGVIG.

This sequence belongs to the 3-hydroxyacyl-CoA dehydrogenase family. L-carnitine dehydrogenase subfamily. As to quaternary structure, homodimer.

It is found in the cytoplasm. The enzyme catalyses carnitine + NAD(+) = 3-dehydrocarnitine + NADH + H(+). It functions in the pathway amine and polyamine metabolism; carnitine metabolism. Functionally, catalyzes the NAD(+)-dependent oxidation of L-carnitine to 3-dehydrocarnitine. The sequence is that of L-carnitine dehydrogenase from Pseudomonas syringae pv. syringae (strain B728a).